A 247-amino-acid chain; its full sequence is Membrane-spanning 4-domains subfamily A member 6D (247 aa).

The Cytoplasmic segment spans residues 1 to 46; it reads MIPQVVTSETVTVISPNGISFPQTDKPQPSHQSQDSLKKHLKAEIK. The chain crosses the membrane as a helical span at residues 47 to 67; the sequence is VMAAIQIMCAVMVLSLGIILA. Residues 68 to 80 lie on the Extracellular side of the membrane; the sequence is SVPSNLHFTSVFS. Residues 81-101 form a helical membrane-spanning segment; that stretch reads ILLESGYPFVGALFFAISGIL. The Cytoplasmic segment spans residues 102–121; the sequence is SIVTEKKMTKPLVHSSLALS. Residues 122 to 142 form a helical membrane-spanning segment; sequence ILSVLSALTGIAILSVSLAAL. Topologically, residues 143–180 are extracellular; that stretch reads EPALQQCKLAFTQLDTTQDAYHFFSPEPLNSCFVAKAA. Residues 181–201 traverse the membrane as a helical segment; it reads LTGVFSLMLISSVLELGLAVL. The Cytoplasmic portion of the chain corresponds to 202–247; it reads TATLWWKQSSSAFSGNVIFLSQNSKNKSSVSSESLCNPTYENILTS. At Ser-235 the chain carries Phosphoserine.

It belongs to the MS4A family. As to expression, expressed in thymus, spleen, intestine, colon, testis, heart, liver, brain, kidney, peripheral lymph node and bone marrow.

The protein resides in the membrane. Functionally, may be involved in signal transduction as a component of a multimeric receptor complex. The sequence is that of Membrane-spanning 4-domains subfamily A member 6D (Ms4a6d) from Mus musculus (Mouse).